The primary structure comprises 312 residues: uncharacterized protein (312 aa).

The region spanning proline 8 to threonine 65 is the HTH lysR-type domain. Residues leucine 25–serine 45 constitute a DNA-binding region (H-T-H motif).

It belongs to the LysR transcriptional regulatory family.

This is an uncharacterized protein from Mycobacterium tuberculosis (strain CDC 1551 / Oshkosh).